The chain runs to 374 residues: Pectate lyase 1 (374 aa).

The N-terminal stretch at 1 to 22 is a signal peptide; that stretch reads MKYLLPSAAAGLLLLAAQPTMA. A disulfide bridge links cysteine 93 with cysteine 176. 4 residues coordinate Ca(2+): aspartate 150, aspartate 152, glutamate 187, and aspartate 191. Residue arginine 239 is part of the active site. An intrachain disulfide couples cysteine 350 to cysteine 373.

Belongs to the polysaccharide lyase 1 family. PLADES subfamily. Ca(2+) is required as a cofactor.

It localises to the secreted. It catalyses the reaction Eliminative cleavage of (1-&gt;4)-alpha-D-galacturonan to give oligosaccharides with 4-deoxy-alpha-D-galact-4-enuronosyl groups at their non-reducing ends.. It functions in the pathway glycan metabolism; pectin degradation; 2-dehydro-3-deoxy-D-gluconate from pectin: step 2/5. Involved in maceration and soft-rotting of plant tissue. This Pectobacterium carotovorum (Erwinia carotovora) protein is Pectate lyase 1 (pel1).